An 88-amino-acid polypeptide reads, in one-letter code: Small ribosomal subunit protein bS16 (88 aa).

This sequence belongs to the bacterial ribosomal protein bS16 family.

The chain is Small ribosomal subunit protein bS16 from Geotalea uraniireducens (strain Rf4) (Geobacter uraniireducens).